The sequence spans 309 residues: Zinc finger protein-like 1 homolog (309 aa).

The B box-type; degenerate zinc-finger motif lies at 1–43 (MGLCKCPKRKVTNLFCYEHRVNVCEFCLVDNHPNCVVQSYLTW). The segment at 53-101 (CSLCKTTLAEGDTIRLNCLHLLHWKCFDEWAANFPATTAPAGYRCPCCS) adopts an RING-type; atypical zinc-finger fold. The disordered stretch occupies residues 200-221 (GAESSSDTRPLLQLRDADNEEN). The chain crosses the membrane as a helical span at residues 254–274 (KIALFVIFLAVLALITIIMVM).

The protein belongs to the ZFPL1 family.

The protein localises to the membrane. The protein is Zinc finger protein-like 1 homolog of Caenorhabditis elegans.